Reading from the N-terminus, the 147-residue chain is MRTTYMAKPNDVDRKWYIVDATDVSLGRLASVVASILRGKNKPTFTPNVDTGDNVIVINAEKVALTGRKASNKIYYHHTGFAGGLKSRTAGNFRDENPEKLIETSVQGMLPKNSLGHQMALKLHVYAGADHKHEAQKPEVLDITNLI.

This sequence belongs to the universal ribosomal protein uL13 family. Part of the 50S ribosomal subunit.

Its function is as follows. This protein is one of the early assembly proteins of the 50S ribosomal subunit, although it is not seen to bind rRNA by itself. It is important during the early stages of 50S assembly. The protein is Large ribosomal subunit protein uL13 of Levilactobacillus brevis (strain ATCC 367 / BCRC 12310 / CIP 105137 / JCM 1170 / LMG 11437 / NCIMB 947 / NCTC 947) (Lactobacillus brevis).